The sequence spans 111 residues: Putative gamma-glutamylcyclotransferase BH1612 (111 aa).

A substrate-binding site is contributed by 14-17 (YGHL). Catalysis depends on E55, which acts as the Proton acceptor.

The protein belongs to the gamma-glutamylcyclotransferase family.

Its function is as follows. Putative gamma-glutamylcyclotransferase. This Halalkalibacterium halodurans (strain ATCC BAA-125 / DSM 18197 / FERM 7344 / JCM 9153 / C-125) (Bacillus halodurans) protein is Putative gamma-glutamylcyclotransferase BH1612.